A 181-amino-acid polypeptide reads, in one-letter code: Glucose-1-phosphate adenylyltransferase large subunit 2 (181 aa).

The protein belongs to the bacterial/plant glucose-1-phosphate adenylyltransferase family. Heterotetramer. As to expression, leaves.

It localises to the plastid. The protein localises to the chloroplast. It is found in the amyloplast. The catalysed reaction is alpha-D-glucose 1-phosphate + ATP + H(+) = ADP-alpha-D-glucose + diphosphate. Its pathway is glycan biosynthesis; starch biosynthesis. Its activity is regulated as follows. Highly active without 3'phosphoglycerate, and is only slightly affected by the activator 3'phosphoglycerate and inhibitor orthophosphate. In terms of biological role, this protein plays a role in synthesis of starch. It catalyzes the synthesis of the activated glycosyl donor, ADP-glucose from Glc-1-P and ATP. The protein is Glucose-1-phosphate adenylyltransferase large subunit 2 of Hordeum vulgare (Barley).